The sequence spans 264 residues: Putative serine carboxypeptidase-like 53 (264 aa).

The first 23 residues, 1–23, serve as a signal peptide directing secretion; sequence MGKLQDWSITTCLFLFFLHASQT. N-linked (GlcNAc...) asparagine glycosylation is found at N65, N101, N153, and N184.

Belongs to the peptidase S10 family.

It localises to the secreted. In Arabidopsis thaliana (Mouse-ear cress), this protein is Putative serine carboxypeptidase-like 53 (SCPL53).